The primary structure comprises 876 residues: Alanine--tRNA ligase (876 aa).

Positions 564, 568, 666, and 670 each coordinate Zn(2+).

It belongs to the class-II aminoacyl-tRNA synthetase family. It depends on Zn(2+) as a cofactor.

Its subcellular location is the cytoplasm. It carries out the reaction tRNA(Ala) + L-alanine + ATP = L-alanyl-tRNA(Ala) + AMP + diphosphate. In terms of biological role, catalyzes the attachment of alanine to tRNA(Ala) in a two-step reaction: alanine is first activated by ATP to form Ala-AMP and then transferred to the acceptor end of tRNA(Ala). Also edits incorrectly charged Ser-tRNA(Ala) and Gly-tRNA(Ala) via its editing domain. This chain is Alanine--tRNA ligase, found in Colwellia psychrerythraea (strain 34H / ATCC BAA-681) (Vibrio psychroerythus).